Reading from the N-terminus, the 255-residue chain is Hydroxyacylglutathione hydrolase (255 aa).

His-56, His-58, Asp-60, His-61, His-114, Asp-133, and His-171 together coordinate Zn(2+).

It belongs to the metallo-beta-lactamase superfamily. Glyoxalase II family. Monomer. Zn(2+) serves as cofactor.

It carries out the reaction an S-(2-hydroxyacyl)glutathione + H2O = a 2-hydroxy carboxylate + glutathione + H(+). It participates in secondary metabolite metabolism; methylglyoxal degradation; (R)-lactate from methylglyoxal: step 2/2. Thiolesterase that catalyzes the hydrolysis of S-D-lactoyl-glutathione to form glutathione and D-lactic acid. The protein is Hydroxyacylglutathione hydrolase of Bradyrhizobium sp. (strain ORS 278).